The following is a 196-amino-acid chain: Large ribosomal subunit protein uL18 (196 aa).

It belongs to the universal ribosomal protein uL18 family. In terms of assembly, part of the 50S ribosomal subunit. Contacts the 5S and 23S rRNAs.

Its function is as follows. This is one of the proteins that bind and probably mediate the attachment of the 5S RNA into the large ribosomal subunit, where it forms part of the central protuberance. The protein is Large ribosomal subunit protein uL18 of Desulfurococcus amylolyticus (strain DSM 18924 / JCM 16383 / VKM B-2413 / 1221n) (Desulfurococcus kamchatkensis).